The following is a 299-amino-acid chain: Nicotinate-nucleotide pyrophosphorylase [carboxylating] (299 aa).

Positions 8-12 are important for hexamer formation; that stretch reads FLLPP. Residues arginine 102, 138–139, 160–161, lysine 171, glutamate 201, aspartate 222, 248–250, and glycine 270 contribute to the quinolinate site; these read RK, HR, and SGG.

This sequence belongs to the NadC/ModD family. In terms of assembly, hexamer formed by 3 homodimers.

The enzyme catalyses nicotinate beta-D-ribonucleotide + CO2 + diphosphate = quinolinate + 5-phospho-alpha-D-ribose 1-diphosphate + 2 H(+). It participates in cofactor biosynthesis; NAD(+) biosynthesis; nicotinate D-ribonucleotide from quinolinate: step 1/1. Involved in the catabolism of quinolinic acid (QA). In Rattus norvegicus (Rat), this protein is Nicotinate-nucleotide pyrophosphorylase [carboxylating] (Qprt).